The sequence spans 68 residues: Cx9C motif-containing protein 4 (68 aa).

Residues 4–46 (KDPCQKQACEIQKCLQANNYLESKCQAVIQELRKCCARYPKGR) enclose the CHCH domain. Short sequence motifs (cx9C motif) lie at residues 7–17 (CQKQACEIQKC) and 28–38 (CQAVIQELRKC). Disulfide bonds link Cys7/Cys38, Cys17/Cys28, and Cys39/Cys50.

This sequence belongs to the CMC4 family. As to expression, expressed in many tissues.

The protein localises to the mitochondrion. This chain is Cx9C motif-containing protein 4 (Cmc4), found in Mus musculus (Mouse).